A 432-amino-acid chain; its full sequence is C2H2 type master regulator of conidiophore development brlA (432 aa).

2 disordered regions span residues 22–72 (SNEC…RTPG) and 238–260 (KQHS…ADTP). The segment covering 29-44 (TSSFSPLESPTPTPTS) has biased composition (low complexity). Composition is skewed to polar residues over residues 62–72 (LPNNTYERTPG) and 238–252 (KQHS…CSLG). 2 C2H2-type zinc fingers span residues 320-344 (FKCK…MKSH) and 350-375 (HVCW…TKTH). The segment at 388 to 432 (LDENSPDYDPEFRGQLTPDGRPIYGSKLDDPIPGAGDMSLDGWDE) is disordered.

Its subcellular location is the nucleus. BrlA, abaA and wetA are pivotal regulators of conidiophore development and conidium maturation. They act individually and together to regulate their own expression and that of numerous other sporulation-specific genes. Binds promoters of target genes at brlA response elements (BREs) containing the conserved sequence 5'-(C/A)(A/G)AGGG(G/A)-3'. Controls the expression of the conidiophore-specific phenol oxidase ivoB. Controls the expression of the hydrophobin rodA. Mediates the developmental switch from the indeterminate, apical growth pattern of vegetative cells to the budding growth pattern of conidiophores. Expression of brlA leads to activation of abaA, wetA and stuA, cessation of vegetative growth, cellular vacuolization and spore formation. This chain is C2H2 type master regulator of conidiophore development brlA, found in Emericella nidulans (strain FGSC A4 / ATCC 38163 / CBS 112.46 / NRRL 194 / M139) (Aspergillus nidulans).